The sequence spans 140 residues: Ribosome-binding factor A (140 aa).

A disordered region spans residues 115-140 (EDERQQRGDIPPGSDQQPGSDEQPTG). Polar residues predominate over residues 128–140 (SDQQPGSDEQPTG).

Belongs to the RbfA family. In terms of assembly, monomer. Binds 30S ribosomal subunits, but not 50S ribosomal subunits or 70S ribosomes.

The protein resides in the cytoplasm. One of several proteins that assist in the late maturation steps of the functional core of the 30S ribosomal subunit. Associates with free 30S ribosomal subunits (but not with 30S subunits that are part of 70S ribosomes or polysomes). Required for efficient processing of 16S rRNA. May interact with the 5'-terminal helix region of 16S rRNA. The protein is Ribosome-binding factor A of Synechococcus sp. (strain CC9605).